The following is a 357-amino-acid chain: Phosphoribosylformylglycinamidine cyclo-ligase (357 aa).

It belongs to the AIR synthase family.

The protein localises to the cytoplasm. The enzyme catalyses 2-formamido-N(1)-(5-O-phospho-beta-D-ribosyl)acetamidine + ATP = 5-amino-1-(5-phospho-beta-D-ribosyl)imidazole + ADP + phosphate + H(+). It participates in purine metabolism; IMP biosynthesis via de novo pathway; 5-amino-1-(5-phospho-D-ribosyl)imidazole from N(2)-formyl-N(1)-(5-phospho-D-ribosyl)glycinamide: step 2/2. This chain is Phosphoribosylformylglycinamidine cyclo-ligase, found in Rhizobium leguminosarum bv. trifolii (strain WSM2304).